The chain runs to 128 residues: LIM domain-containing protein 2 (128 aa).

The residue at position 1 (M1) is an N-acetylmethionine. The tract at residues 1-25 is disordered; the sequence is MFQAAGAAQATPSHEAKGGGSSSTV. The LIM zinc-binding domain occupies 39–99; the sequence is ETCAACQKTV…KPHFQQLFKS (61 aa). Zn(2+) is bound by residues C41, C44, H62, C65, C68, C71, C89, and H92.

Interacts with ILK.

Its subcellular location is the cytoplasm. It is found in the nucleus. Its function is as follows. Acts as an activator of the protein-kinase ILK, thereby regulating cell motility. The sequence is that of LIM domain-containing protein 2 (LIMD2) from Bos taurus (Bovine).